The sequence spans 214 residues: DNA-directed RNA polymerase subunit alpha (214 aa).

Belongs to the RNA polymerase alpha chain family. As to quaternary structure, in plastids the minimal PEP RNA polymerase catalytic core is composed of four subunits: alpha, beta, beta', and beta''. When a (nuclear-encoded) sigma factor is associated with the core the holoenzyme is formed, which can initiate transcription.

It localises to the plastid. Its subcellular location is the chloroplast. It carries out the reaction RNA(n) + a ribonucleoside 5'-triphosphate = RNA(n+1) + diphosphate. DNA-dependent RNA polymerase catalyzes the transcription of DNA into RNA using the four ribonucleoside triphosphates as substrates. This is DNA-directed RNA polymerase subunit alpha (rpoA) from Euglena viridis (Cercaria viridis).